Consider the following 512-residue polypeptide: MFCSAQKGSCSSRVSSSGAVGSRGCTGGSSFGGGSSCGLGGGSAWGFQGSSNSWSLSGGSKGSMGGGFGSCSVRGGFGAASSYGGGSGFGGSSGFGGGSGFGGGSGFGGGSSGGFSSYGGSMGCGLGGVSGYDGGLLSGSEKQTMQDLNDRLANYLDKVRALEEANTDLECKIKDWYGKHGSVKGGSGRDYSQYYSIIEDLKKQILSATCENARMTLQIDNARLAADDFRMKYEHELCLRECLEADINGLRKVLDEMTMTRCDLEMQIEGLTEELVFLRKNHEEEMKCMQGSSGGDVTVEMNAAPGVDLTKLLNDMRAQYEAMAEQNRQEAERQFNERSASLQAQISSDAGEANCARSEVMELKRTVQTLEIELQSQLALKCSLEGTLADTEAGYVAQLSGIQAQISSLEEQLSQIRAETQCQSAEYECLLNIKTRLEQEIETYRRLLNGDGGGCDYRNLVSKNVVLSDSGSCAGQGKDPSKTRVTKTIIEEVVDGRVVSSQVSNISEVKIK.

The interval 1–21 (MFCSAQKGSCSSRVSSSGAVG) is disordered. The segment at 1 to 140 (MFCSAQKGSC…GYDGGLLSGS (140 aa)) is head. The span at 8-21 (GSCSSRVSSSGAVG) shows a compositional bias: low complexity. The tract at residues 141-176 (EKQTMQDLNDRLANYLDKVRALEEANTDLECKIKDW) is coil 1A. One can recognise an IF rod domain in the interval 141 to 455 (EKQTMQDLND…RLLNGDGGGC (315 aa)). Positions 177 to 197 (YGKHGSVKGGSGRDYSQYYSI) are linker 1. Positions 198–289 (IEDLKKQILS…KNHEEEMKCM (92 aa)) are coil 1B. The linker 12 stretch occupies residues 290-312 (QGSSGGDVTVEMNAAPGVDLTKL). The interval 313–451 (LNDMRAQYEA…ETYRRLLNGD (139 aa)) is coil 2. The tract at residues 452 to 512 (GGGCDYRNLV…VSNISEVKIK (61 aa)) is tail.

This sequence belongs to the intermediate filament family. Heterotetramer of two type I and two type II keratins.

This chain is Keratin, type I cytoskeletal 24 (Krt24), found in Mus musculus (Mouse).